Here is a 501-residue protein sequence, read N- to C-terminus: Glycerol kinase (501 aa).

Thr17 serves as a coordination point for ADP. Residues Thr17, Thr18, and Ser19 each coordinate ATP. Thr17 is a binding site for sn-glycerol 3-phosphate. Arg21 contacts ADP. 4 residues coordinate sn-glycerol 3-phosphate: Arg87, Glu88, Tyr139, and Asp243. Glycerol contacts are provided by Arg87, Glu88, Tyr139, Asp243, and Gln244. 2 residues coordinate ADP: Thr265 and Gly308. The ATP site is built by Thr265, Gly308, Gln312, and Gly409. ADP is bound by residues Gly409 and Asn413.

Belongs to the FGGY kinase family.

The enzyme catalyses glycerol + ATP = sn-glycerol 3-phosphate + ADP + H(+). The protein operates within polyol metabolism; glycerol degradation via glycerol kinase pathway; sn-glycerol 3-phosphate from glycerol: step 1/1. With respect to regulation, inhibited by fructose 1,6-bisphosphate (FBP). Its function is as follows. Key enzyme in the regulation of glycerol uptake and metabolism. Catalyzes the phosphorylation of glycerol to yield sn-glycerol 3-phosphate. In Pseudomonas syringae pv. tomato (strain ATCC BAA-871 / DC3000), this protein is Glycerol kinase.